A 347-amino-acid chain; its full sequence is MVPESFLLELPKCEHHLHLEGTLEPDLLFPLAKRNNIQLPDHFPQTPEELAVRYTQFKDLQDFLDYYYIGTNVLLKEEDFFDLAWAYFTKVSKQGLVHAELFYDPQSHTTRGVSLETVTRGFERACKKAHEELGITSKLIMCLLRHLPPQDCLQTIEEAEQLIKSGVIHGLGLDSAEKPFPPSLFVECYERAAKINPELRLTAHAGEEGTHQFVSDALDLLNVTRIDHGVNSKQSEELMARLAEQQTLLTVCPLSNVKLQVVQSVKEIPLQLFLDKNIAFSLNSDDPAYFGGYILDNYYQVNKDFPDWDFKVWERIAKNGINGSWCEQKRKEELLAKVDAVVAKYTN.

Zn(2+) is bound by residues H16, H18, and H204. E207 acts as the Proton donor in catalysis. D285 provides a ligand contact to Zn(2+). D286 serves as a coordination point for substrate.

It belongs to the metallo-dependent hydrolases superfamily. Adenosine and AMP deaminases family. Adenine deaminase type 2 subfamily. Requires Zn(2+) as cofactor.

Its subcellular location is the cytoplasm. It is found in the nucleus. The enzyme catalyses adenine + H2O + H(+) = hypoxanthine + NH4(+). In terms of biological role, catalyzes the hydrolytic deamination of adenine to hypoxanthine. Plays an important role in the purine salvage pathway and in nitrogen catabolism. The polypeptide is Adenine deaminase (Candida glabrata (strain ATCC 2001 / BCRC 20586 / JCM 3761 / NBRC 0622 / NRRL Y-65 / CBS 138) (Yeast)).